Reading from the N-terminus, the 322-residue chain is Aspartate carbamoyltransferase catalytic subunit (322 aa).

The carbamoyl phosphate site is built by Arg-65 and Thr-66. Lys-93 contacts L-aspartate. 3 residues coordinate carbamoyl phosphate: Arg-115, His-143, and Gln-146. The L-aspartate site is built by Arg-176 and Arg-230. Positions 271 and 272 each coordinate carbamoyl phosphate.

This sequence belongs to the aspartate/ornithine carbamoyltransferase superfamily. ATCase family. In terms of assembly, heterododecamer (2C3:3R2) of six catalytic PyrB chains organized as two trimers (C3), and six regulatory PyrI chains organized as three dimers (R2).

The catalysed reaction is carbamoyl phosphate + L-aspartate = N-carbamoyl-L-aspartate + phosphate + H(+). Its pathway is pyrimidine metabolism; UMP biosynthesis via de novo pathway; (S)-dihydroorotate from bicarbonate: step 2/3. In terms of biological role, catalyzes the condensation of carbamoyl phosphate and aspartate to form carbamoyl aspartate and inorganic phosphate, the committed step in the de novo pyrimidine nucleotide biosynthesis pathway. The protein is Aspartate carbamoyltransferase catalytic subunit of Brucella abortus (strain S19).